The primary structure comprises 307 residues: Nucleotide-binding protein Achl_1824 (307 aa).

30-37 (GMSGAGRS) is an ATP binding site. 81–84 (DVRS) serves as a coordination point for GTP.

Belongs to the RapZ-like family.

Functionally, displays ATPase and GTPase activities. In Pseudarthrobacter chlorophenolicus (strain ATCC 700700 / DSM 12829 / CIP 107037 / JCM 12360 / KCTC 9906 / NCIMB 13794 / A6) (Arthrobacter chlorophenolicus), this protein is Nucleotide-binding protein Achl_1824.